The following is a 357-amino-acid chain: Hemolysin VllY (357 aa).

VOC domains follow at residues 12-132 (GFEF…FVDR) and 162-313 (EIDH…IFTQ). Positions 165, 243, and 322 each coordinate Fe cation.

The protein belongs to the 4HPPD family. The cofactor is Fe cation.

The chain is Hemolysin VllY (vllY) from Vibrio vulnificus (strain CMCP6).